The chain runs to 318 residues: uncharacterized protein (318 aa).

This is an uncharacterized protein from Ictaluridae (bullhead catfishes).